The following is a 557-amino-acid chain: Dihydroxy-acid dehydratase (557 aa).

Mg(2+) is bound at residue aspartate 78. Cysteine 119 is a [2Fe-2S] cluster binding site. 2 residues coordinate Mg(2+): aspartate 120 and lysine 121. At lysine 121 the chain carries N6-carboxylysine. Cysteine 191 is a binding site for [2Fe-2S] cluster. Mg(2+) is bound at residue glutamate 442. The active-site Proton acceptor is the serine 468.

It belongs to the IlvD/Edd family. Homodimer. It depends on [2Fe-2S] cluster as a cofactor. The cofactor is Mg(2+).

The enzyme catalyses (2R)-2,3-dihydroxy-3-methylbutanoate = 3-methyl-2-oxobutanoate + H2O. It catalyses the reaction (2R,3R)-2,3-dihydroxy-3-methylpentanoate = (S)-3-methyl-2-oxopentanoate + H2O. The protein operates within amino-acid biosynthesis; L-isoleucine biosynthesis; L-isoleucine from 2-oxobutanoate: step 3/4. It participates in amino-acid biosynthesis; L-valine biosynthesis; L-valine from pyruvate: step 3/4. In terms of biological role, functions in the biosynthesis of branched-chain amino acids. Catalyzes the dehydration of (2R,3R)-2,3-dihydroxy-3-methylpentanoate (2,3-dihydroxy-3-methylvalerate) into 2-oxo-3-methylpentanoate (2-oxo-3-methylvalerate) and of (2R)-2,3-dihydroxy-3-methylbutanoate (2,3-dihydroxyisovalerate) into 2-oxo-3-methylbutanoate (2-oxoisovalerate), the penultimate precursor to L-isoleucine and L-valine, respectively. The sequence is that of Dihydroxy-acid dehydratase from Lachnoclostridium phytofermentans (strain ATCC 700394 / DSM 18823 / ISDg) (Clostridium phytofermentans).